The following is a 295-amino-acid chain: Sulfotransferase 1E1 (295 aa).

Residue 48–53 (KSGTTW) coordinates 3'-phosphoadenylyl sulfate. Substrate is bound at residue 106 to 108 (KSH). His108 (proton acceptor) is an active-site residue. Positions 130, 138, and 193 each coordinate 3'-phosphoadenylyl sulfate. Ser216 and Ser228 each carry phosphoserine; by PKA. 3'-phosphoadenylyl sulfate is bound by residues 227 to 232 (TSFQEM) and 257 to 259 (RKG).

It belongs to the sulfotransferase 1 family. Homodimer.

The protein localises to the cytoplasm. The protein resides in the cytosol. It catalyses the reaction estrone + 3'-phosphoadenylyl sulfate = estrone 3-sulfate + adenosine 3',5'-bisphosphate + H(+). The catalysed reaction is (24S)-hydroxycholesterol + 3'-phosphoadenylyl sulfate = (24S)-hydroxycholesterol 3-sulfate + adenosine 3',5'-bisphosphate + H(+). It carries out the reaction 17beta-estradiol + 3'-phosphoadenylyl sulfate = 17beta-estradiol 3-sulfate + adenosine 3',5'-bisphosphate + H(+). The enzyme catalyses 3beta-hydroxyandrost-5-en-17-one + 3'-phosphoadenylyl sulfate = dehydroepiandrosterone 3-sulfate + adenosine 3',5'-bisphosphate + H(+). It catalyses the reaction 4-ethylphenol + 3'-phosphoadenylyl sulfate = 4-ethylphenyl sulfate + adenosine 3',5'-bisphosphate + H(+). Its activity is regulated as follows. Inhibited by estradiol. Its function is as follows. Sulfotransferase that utilizes 3'-phospho-5'-adenylyl sulfate (PAPS) as sulfonate donor to catalyze the sulfate conjugation of estradiol and estrone. Is a key enzyme in estrogen homeostasis, the sulfation of estrogens leads to their inactivation. Also sulfates dehydroepiandrosterone (DHEA), pregnenolone, (24S)-hydroxycholesterol and xenobiotic compounds like ethinylestradiol, equalenin, diethyl stilbesterol and 1-naphthol at significantly lower efficiency. Does not sulfonate cortisol, testosterone and dopamine. May play a role in gut microbiota-host metabolic interaction. O-sulfonates 4-ethylphenol (4-EP), a dietary tyrosine-derived metabolite produced by gut bacteria. The product 4-EPS crosses the blood-brain barrier and may negatively regulate oligodendrocyte maturation and myelination, affecting the functional connectivity of different brain regions associated with the limbic system. The sequence is that of Sulfotransferase 1E1 (SULT1E1) from Bos taurus (Bovine).